Consider the following 179-residue polypeptide: Large ribosomal subunit protein uL5 (179 aa).

It belongs to the universal ribosomal protein uL5 family. Part of the 50S ribosomal subunit; part of the 5S rRNA/L5/L18/L25 subcomplex. Contacts the 5S rRNA and the P site tRNA. Forms a bridge to the 30S subunit in the 70S ribosome.

This is one of the proteins that bind and probably mediate the attachment of the 5S RNA into the large ribosomal subunit, where it forms part of the central protuberance. In the 70S ribosome it contacts protein S13 of the 30S subunit (bridge B1b), connecting the 2 subunits; this bridge is implicated in subunit movement. Contacts the P site tRNA; the 5S rRNA and some of its associated proteins might help stabilize positioning of ribosome-bound tRNAs. The sequence is that of Large ribosomal subunit protein uL5 from Buchnera aphidicola subsp. Acyrthosiphon pisum (strain APS) (Acyrthosiphon pisum symbiotic bacterium).